The chain runs to 176 residues: Lipoprotein signal peptidase (176 aa).

4 consecutive transmembrane segments (helical) span residues 10 to 30 (LFQF…AIVL), 48 to 68 (VPVL…AFSF), 78 to 98 (YFFT…LLRM), and 102 to 122 (MVVL…NLID). Residues D131 and D149 contribute to the active site. A helical membrane pass occupies residues 141–161 (HFPAFNIADSAITLGTILLLI).

Belongs to the peptidase A8 family.

The protein resides in the cell inner membrane. The enzyme catalyses Release of signal peptides from bacterial membrane prolipoproteins. Hydrolyzes -Xaa-Yaa-Zaa-|-(S,diacylglyceryl)Cys-, in which Xaa is hydrophobic (preferably Leu), and Yaa (Ala or Ser) and Zaa (Gly or Ala) have small, neutral side chains.. The protein operates within protein modification; lipoprotein biosynthesis (signal peptide cleavage). This protein specifically catalyzes the removal of signal peptides from prolipoproteins. The chain is Lipoprotein signal peptidase from Acinetobacter baumannii (strain ATCC 17978 / DSM 105126 / CIP 53.77 / LMG 1025 / NCDC KC755 / 5377).